A 380-amino-acid chain; its full sequence is High affinity transport system protein p37 (380 aa).

Positions 1-26 (MLKRKKLLQGFLKFLPLIIPATIFVS) are cleaved as a signal peptide. Cys-27 carries N-palmitoyl cysteine lipidation. Residue Cys-27 is the site of S-diacylglycerol cysteine attachment. Positions 285-304 (NHFYTPTENNGKGDSEKSNN) are disordered.

It localises to the cell membrane. Functionally, P37 is part of a high-affinity transport system. The chain is High affinity transport system protein p37 (p37) from Mycoplasma pneumoniae (strain ATCC 29342 / M129 / Subtype 1) (Mycoplasmoides pneumoniae).